Here is a 673-residue protein sequence, read N- to C-terminus: Probable potassium transport system protein Kup 1 (673 aa).

13 helical membrane-spanning segments follow: residues 14-34 (GAGFIIAMGIVYGDIGTSPLY), 58-78 (LSLIIWTLTLITTVKYVWIAL), 101-121 (WLIIPAMIGGAALLSDGALTP), 147-167 (LPIVIITLAILAILFLIQRFG), 175-195 (FGPVMFIWFSFFGITGLINLF), 196-216 (GDFSVLQAINPYWAIHLLLSP), 220-240 (AGIFVLGSVFLATTGAEALYS), 252-272 (VSWPFVKVCIILSYCGQAAWL), 294-314 (LIIFSVILATLAAIIASQALI), 345-365 (LYIPAVNLGLWLAASFIVVYF), 374-394 (AYGLAITVTMLMTTILLTVYL), 403-423 (VFVVLFFGAFIFIEGLFFAAS), and 427-447 (FLHGGYVVVILAALILFVMAI).

The protein belongs to the HAK/KUP transporter (TC 2.A.72) family.

The protein localises to the cell membrane. It carries out the reaction K(+)(in) + H(+)(in) = K(+)(out) + H(+)(out). Its function is as follows. Transport of potassium into the cell. Likely operates as a K(+):H(+) symporter. The protein is Probable potassium transport system protein Kup 1 of Lactococcus lactis subsp. cremoris (strain SK11).